Consider the following 360-residue polypeptide: Phospho-N-acetylmuramoyl-pentapeptide-transferase (360 aa).

A run of 10 helical transmembrane segments spans residues 16-36 (FAVF…ALVL), 73-93 (TMGG…WADL), 97-117 (YVWV…VDDY), 134-154 (YFWQ…TAST), 168-188 (YSIP…VGSS), 199-219 (GLAI…CYLS), 236-256 (AGEL…FLWF), 263-283 (VFMG…IAVI), 288-308 (IVLF…VIQV), and 338-358 (VIVR…ATLK).

This sequence belongs to the glycosyltransferase 4 family. MraY subfamily. It depends on Mg(2+) as a cofactor.

The protein resides in the cell inner membrane. It catalyses the reaction UDP-N-acetyl-alpha-D-muramoyl-L-alanyl-gamma-D-glutamyl-meso-2,6-diaminopimeloyl-D-alanyl-D-alanine + di-trans,octa-cis-undecaprenyl phosphate = di-trans,octa-cis-undecaprenyl diphospho-N-acetyl-alpha-D-muramoyl-L-alanyl-D-glutamyl-meso-2,6-diaminopimeloyl-D-alanyl-D-alanine + UMP. It functions in the pathway cell wall biogenesis; peptidoglycan biosynthesis. Functionally, catalyzes the initial step of the lipid cycle reactions in the biosynthesis of the cell wall peptidoglycan: transfers peptidoglycan precursor phospho-MurNAc-pentapeptide from UDP-MurNAc-pentapeptide onto the lipid carrier undecaprenyl phosphate, yielding undecaprenyl-pyrophosphoryl-MurNAc-pentapeptide, known as lipid I. The polypeptide is Phospho-N-acetylmuramoyl-pentapeptide-transferase (Pseudomonas fluorescens (strain Pf0-1)).